A 352-amino-acid polypeptide reads, in one-letter code: MWKIHNKLLIYILWIMEIRLVSSFTSVMLCGRIPGLTPGQRNMCREMPDALIALGEGHQLGAQECQHQFRGHRWNCSEVWQRNVFAHVIPTASREAAYTYAIASAGAAYAVTAACARGNISTCGCDVRHKATPTGGGTPDEPWKWGGCSADVDFGMRYARRFMDARELERDSRTLMNLHNNRAGRTLVKKMLRTDCKCHGVSGSCVMKTCWKSLPPFRLVGDRLMLKYQKAKTVQAVKGKRGLRLVLSRKKHAGTARAQKPVLDWPKRMELIYLEASPNYCERSLQTGSQGTSGRTCQRTGHGPQSCDLLCCGRGHNTQHIRRTTQCRCQFRWCCEVKCDECDESYEEFTCK.

An N-terminal signal peptide occupies residues Met1–Ser23. Intrachain disulfides connect Cys65/Cys76, Cys115/Cys123, Cys125/Cys148, Cys196/Cys210, Cys198/Cys205, Cys281/Cys312, Cys297/Cys307, Cys311/Cys351, Cys327/Cys342, Cys329/Cys339, and Cys334/Cys335. N-linked (GlcNAc...) asparagine glycans are attached at residues Asn75 and Asn119. Ser202 carries O-palmitoleoyl serine; by PORCN lipidation.

This sequence belongs to the Wnt family. Post-translationally, palmitoleoylated by porcupine. The lipid group functions as a sorting signal, targeting the ligand to polarized vesicles that transport Wnt2 to unique sites at the cell surface. Depalmitoleoylated by notum, leading to inhibit Wnt signaling pathway. In terms of tissue distribution, dynamic expression pattern during embryogenesis. Expression is predominantly segmented, with expression also seen in the limb primordia and presumptive gonads. In embryonic tracheal cells, expression is close to and dorsal to the tracheal placode.

It localises to the secreted. The protein resides in the extracellular space. It is found in the extracellular matrix. Functionally, binds as a ligand to a family of frizzled seven-transmembrane receptors and acts through a cascade of genes on the nucleus. Segment polarity protein. May function in gonadogenesis and limb development. Wg and Wnt2 have a role in the developing trachea and together are responsible for all dorsal trunk formation. In Drosophila melanogaster (Fruit fly), this protein is Protein Wnt-2 (Wnt2).